Here is a 420-residue protein sequence, read N- to C-terminus: Mannose-1-phosphate guanylyltransferase regulatory subunit alpha (420 aa).

The substrate-binding domain stretch occupies residues 2–251 (LKAVILIGGP…DGIWSQIKSA (250 aa)). GDP-alpha-D-mannose contacts are provided by glutamate 85 and glutamine 247. The segment at 273-420 (LAKHTPGGPW…SRSFTNQIIL (148 aa)) is hexapeptide repeat domain. The C-loop stretch occupies residues 356 to 384 (TPSDPNPNDPRARMDSESLFKDGKLLPAI).

This sequence belongs to the transferase hexapeptide repeat family. Component of the GMPPA-GMPPB mannose-1-phosphate guanylyltransferase complex composed of 4 GMPPA subunits and 8 GMPPB subunits; the complex is organized into three layers, a central layer made up of 2 GMPPA dimers sandwiched between two layers each made up of 2 GMPPB dimers. Expressed in fibroblasts (at protein level).

It localises to the cytoplasm. In terms of biological role, regulatory subunit of the GMPPA-GMPPB mannose-1-phosphate guanylyltransferase complex; reduces the catalytic activity of GMPPB when part of the complex. Mediates allosteric feedback inhibition of GMPPB catalytic activity upon binding GDP-alpha-D-mannose. Together with GMPPB regulates GDP-alpha-D-mannose levels. The sequence is that of Mannose-1-phosphate guanylyltransferase regulatory subunit alpha from Homo sapiens (Human).